The chain runs to 99 residues: Plastocyanin (99 aa).

Positions 1–99 (VEVLLGASDG…AGMVGQVTVN (99 aa)) constitute a Plastocyanin-like domain. 4 residues coordinate Cu cation: His-37, Cys-84, His-87, and Met-92.

The protein belongs to the plastocyanin family. It depends on Cu(2+) as a cofactor.

The protein localises to the plastid. Its subcellular location is the chloroplast thylakoid membrane. Its function is as follows. Participates in electron transfer between P700 and the cytochrome b6-f complex in photosystem I. The chain is Plastocyanin (PETE) from Vicia faba (Broad bean).